A 473-amino-acid chain; its full sequence is Protein AUXIN RESPONSE 4 (473 aa).

Positions 1–10 (MAIITEEEED) are enriched in acidic residues. The disordered stretch occupies residues 1–38 (MAIITEEEEDPKTLNPPKNKPKDSDFTKSESTMKNPKP). Over residues 29 to 38 (SESTMKNPKP) the composition is skewed to polar residues. A helical transmembrane segment spans residues 44–64 (FPFWFYFTVVVSLATIIFISL). Residues 119-283 (TVVIVHGLGL…DSSISPALPL (165 aa)) form the AB hydrolase-1 domain.

In terms of tissue distribution, most abundant in root tissue, lesser amounts in rosette leaves, stems and flowers and very little in mature siliques.

The protein resides in the endoplasmic reticulum membrane. Required for the auxin influx facilitator AUX1 polar trafficking and its asymmetric localization within the plasma membrane. Not involved in the PIN proteins localization. This chain is Protein AUXIN RESPONSE 4 (AXR4), found in Arabidopsis thaliana (Mouse-ear cress).